Here is a 318-residue protein sequence, read N- to C-terminus: MVSAYLLANFGGPRHSNDIEVFLTSLLTDRDVTGGFLPSFIHKRLFSFIAKKRALKVLPQYNCIGGFSPIYQDTELLAETLSSHLDAPVITFHRYLPDTHPHTIQQLKTLGDFPIVGVPLFPHFTYAVTGSIVRFIHNQLPLLNISWVSHFGNHPEFISCMMDHILKFLQSHDISTHDCCLLFSAHGLPMRHVNKGDPYNMQCEKSFRAISERLPNIETHLCYQSKFGPGKWLSPSTKDLCATLKTDKKHVLIVPFGFTSDHIETLYEIEKEYIAVLIDKGYQALRVPAIYQSSQWVESLATIIQSTPHVEKKSLIKS.

Fe cation is bound by residues His186 and Glu264.

The protein belongs to the ferrochelatase family.

Its subcellular location is the cytoplasm. The catalysed reaction is heme b + 2 H(+) = protoporphyrin IX + Fe(2+). It functions in the pathway porphyrin-containing compound metabolism; protoheme biosynthesis; protoheme from protoporphyrin-IX: step 1/1. In terms of biological role, catalyzes the ferrous insertion into protoporphyrin IX. This Chlamydia caviae (strain ATCC VR-813 / DSM 19441 / 03DC25 / GPIC) (Chlamydophila caviae) protein is Ferrochelatase.